A 212-amino-acid polypeptide reads, in one-letter code: Dephospho-CoA kinase (212 aa).

The DPCK domain occupies 4–204 (IVALTGGICS…RDYLKAEKTT (201 aa)). ATP is bound at residue 12–17 (CSGKSV).

Belongs to the CoaE family.

The protein resides in the cytoplasm. The enzyme catalyses 3'-dephospho-CoA + ATP = ADP + CoA + H(+). It participates in cofactor biosynthesis; coenzyme A biosynthesis; CoA from (R)-pantothenate: step 5/5. Functionally, catalyzes the phosphorylation of the 3'-hydroxyl group of dephosphocoenzyme A to form coenzyme A. The sequence is that of Dephospho-CoA kinase from Blochmanniella pennsylvanica (strain BPEN).